A 187-amino-acid chain; its full sequence is UPF0301 protein YqgE (187 aa).

This sequence belongs to the UPF0301 (AlgH) family.

The protein is UPF0301 protein YqgE of Shigella boydii serotype 4 (strain Sb227).